Here is a 225-residue protein sequence, read N- to C-terminus: Uracil-DNA glycosylase (225 aa).

Catalysis depends on aspartate 67, which acts as the Proton acceptor.

Belongs to the uracil-DNA glycosylase (UDG) superfamily. UNG family.

It localises to the cytoplasm. The catalysed reaction is Hydrolyzes single-stranded DNA or mismatched double-stranded DNA and polynucleotides, releasing free uracil.. In terms of biological role, excises uracil residues from the DNA which can arise as a result of misincorporation of dUMP residues by DNA polymerase or due to deamination of cytosine. The protein is Uracil-DNA glycosylase of Coxiella burnetii (strain Dugway 5J108-111).